The primary structure comprises 99 residues: UPF0045 protein MTH_1187 (99 aa).

Belongs to the UPF0045 family. As to quaternary structure, homotetramer.

This chain is UPF0045 protein MTH_1187, found in Methanothermobacter thermautotrophicus (strain ATCC 29096 / DSM 1053 / JCM 10044 / NBRC 100330 / Delta H) (Methanobacterium thermoautotrophicum).